A 152-amino-acid polypeptide reads, in one-letter code: Cell division protein SepF (152 aa).

A compositionally biased stretch (basic and acidic residues) spans 23-32; it reads EVAREPEPMQ. The interval 23–42 is disordered; it reads EVAREPEPMQKKTKKEKPSK.

It belongs to the SepF family. As to quaternary structure, homodimer. Interacts with FtsZ.

It is found in the cytoplasm. In terms of biological role, cell division protein that is part of the divisome complex and is recruited early to the Z-ring. Probably stimulates Z-ring formation, perhaps through the cross-linking of FtsZ protofilaments. Its function overlaps with FtsA. The sequence is that of Cell division protein SepF from Listeria welshimeri serovar 6b (strain ATCC 35897 / DSM 20650 / CCUG 15529 / CIP 8149 / NCTC 11857 / SLCC 5334 / V8).